The primary structure comprises 204 residues: bMERB domain-containing protein 1 (204 aa).

In terms of domain architecture, bMERB spans 3–150 (LKQSLSTHLE…EQEEDKEMAD (148 aa)). The interval 162–187 (VTKSPASSRAEKKAEPPPSKPTVAKT) is disordered.

The chain is bMERB domain-containing protein 1 from Homo sapiens (Human).